The chain runs to 122 residues: Probable glycine cleavage system H protein (122 aa).

The Lipoyl-binding domain occupies 23 to 104; sequence IATVGITDYA…PYGNWLVKMK (82 aa). An N6-lipoyllysine modification is found at lysine 64.

Belongs to the GcvH family. The glycine cleavage system is composed of four proteins: P, T, L and H. It depends on (R)-lipoate as a cofactor.

In terms of biological role, the glycine cleavage system catalyzes the degradation of glycine. The H protein shuttles the methylamine group of glycine from the P protein to the T protein. In Thermoplasma volcanium (strain ATCC 51530 / DSM 4299 / JCM 9571 / NBRC 15438 / GSS1), this protein is Probable glycine cleavage system H protein.